The following is a 62-amino-acid chain: MTLIFQLTLFAFVGLSFLLVVGVPVVFASPNGWTENKQVVFSGIGFWFLLVFAVGILNSFVI.

Transmembrane regions (helical) follow at residues 8–28 (TLFA…VVFA) and 41–61 (FSGI…NSFV).

The protein belongs to the PsbZ family. In terms of assembly, PSII is composed of 1 copy each of membrane proteins PsbA, PsbB, PsbC, PsbD, PsbE, PsbF, PsbH, PsbI, PsbJ, PsbK, PsbL, PsbM, PsbT, PsbY, PsbZ, Psb30/Ycf12, at least 3 peripheral proteins of the oxygen-evolving complex and a large number of cofactors. It forms dimeric complexes.

Its subcellular location is the plastid. The protein localises to the chloroplast thylakoid membrane. Its function is as follows. May control the interaction of photosystem II (PSII) cores with the light-harvesting antenna, regulates electron flow through the 2 photosystem reaction centers. PSII is a light-driven water plastoquinone oxidoreductase, using light energy to abstract electrons from H(2)O, generating a proton gradient subsequently used for ATP formation. This is Photosystem II reaction center protein Z from Tupiella akineta (Green alga).